Reading from the N-terminus, the 238-residue chain is Triggering receptor expressed on myeloid cells 1 (238 aa).

A signal peptide spans 1–20 (MRSARLGRLLWMLFITEIQA). The Ig-like V-type domain occupies 21–129 (ATELPEEKYI…KDPIILFYPV (109 aa)). The Extracellular portion of the chain corresponds to 21-210 (ATELPEEKYI…DITRDTEISL (190 aa)). Cys41 and Cys113 are disulfide-bonded. Asn135 carries an N-linked (GlcNAc...) asparagine glycan. The tract at residues 141–169 (PASAETPTQSCSPTTTLPPTTTTNRHRPR) is disordered. Residues 146–163 (TPTQSCSPTTTLPPTTTT) are compositionally biased toward low complexity. The N-linked (GlcNAc...) asparagine glycan is linked to Asn198. A helical transmembrane segment spans residues 211–231 (ILPAVCGLLSKSLVFIVLFVV). At 232 to 238 (TRMSFTP) the chain is on the cytoplasmic side.

In terms of assembly, monomer. Homomultimer; when activated. Interacts with TYROBP/DAP12. Interacts with TLR4.

The protein localises to the cell membrane. Its function is as follows. Cell surface receptor that plays important roles in innate and adaptive immunity by amplifying inflammatory responses. Upon activation by various ligands such as PGLYRP1, HMGB1 or HSP70, multimerizes and forms a complex with transmembrane adapter TYROBP/DAP12. In turn, initiates a SYK-mediated cascade of tyrosine phosphorylation, activating multiple downstream mediators such as BTK, MAPK1, MAPK3 or phospholipase C-gamma. This cascade promotes the neutrophil- and macrophage-mediated release of pro-inflammatory cytokines and/or chemokines, as well as their migration and thereby amplifies inflammatory responses that are triggered by bacterial and fungal infections. By also promoting the amplification of inflammatory signals that are initially triggered by Toll-like receptor (TLR) and NOD-like receptor engagement, plays a major role in the pathophysiology of acute and chronic inflammatory diseases of different etiologies including septic shock and atherosclerosis. The sequence is that of Triggering receptor expressed on myeloid cells 1 (TREM1) from Sus scrofa (Pig).